Reading from the N-terminus, the 422-residue chain is Glutamate-1-semialdehyde 2,1-aminomutase (422 aa).

Lysine 264 bears the N6-(pyridoxal phosphate)lysine mark.

It belongs to the class-III pyridoxal-phosphate-dependent aminotransferase family. HemL subfamily. In terms of assembly, homodimer. Pyridoxal 5'-phosphate is required as a cofactor.

The protein localises to the cytoplasm. The enzyme catalyses (S)-4-amino-5-oxopentanoate = 5-aminolevulinate. The protein operates within porphyrin-containing compound metabolism; protoporphyrin-IX biosynthesis; 5-aminolevulinate from L-glutamyl-tRNA(Glu): step 2/2. The sequence is that of Glutamate-1-semialdehyde 2,1-aminomutase from Clostridium acetobutylicum (strain ATCC 824 / DSM 792 / JCM 1419 / IAM 19013 / LMG 5710 / NBRC 13948 / NRRL B-527 / VKM B-1787 / 2291 / W).